A 1164-amino-acid chain; its full sequence is Protein PLASTID MOVEMENT IMPAIRED 1-RELATED 1 (1164 aa).

A disordered region spans residues 30 to 54 (KNPRGSVAGSNKTPTKPLSRSNLAE). The span at 37 to 51 (AGSNKTPTKPLSRSN) shows a compositional bias: polar residues. A C2 NT-type domain is found at 69–217 (INHVRNRRFN…TLSMSFGYTV (149 aa)). Residues 224-263 (PASSGSTQNFRSSSNVKQTSNNTGLTRAISAKSSLGNGKS) are compositionally biased toward polar residues. 4 disordered regions span residues 224–268 (PASS…SRRY), 466–486 (APEE…PKDA), 1038–1063 (SELK…PMEE), and 1124–1164 (GSAK…IMPK). Basic and acidic residues-rich tracts occupy residues 469 to 486 (EGNK…PKDA) and 1052 to 1062 (SDAKKEEKPME).

It localises to the cytoplasm. Its function is as follows. Together with PMI1, necessary for chloroplast and nuclear photorelocation movements via the regulation of chloroplast-actin (cp-actin) filaments in pavement cells. The sequence is that of Protein PLASTID MOVEMENT IMPAIRED 1-RELATED 1 from Arabidopsis thaliana (Mouse-ear cress).